The following is a 239-amino-acid chain: Serine protease SplC (239 aa).

Residues 1–36 form the signal peptide; the sequence is MNKNIVIKSMAALAILTSVTGINAAVVEETQQIANA. Active-site charge relay system residues include histidine 75, aspartate 113, and serine 193.

It belongs to the peptidase S1B family.

The protein resides in the secreted. The polypeptide is Serine protease SplC (splC) (Staphylococcus aureus (strain MW2)).